We begin with the raw amino-acid sequence, 196 residues long: Large ribosomal subunit protein uL10 (196 aa).

Positions 167–196 (EKKAAEGPAEAPQPATEPPAEAPEAPADAE) are disordered.

Belongs to the universal ribosomal protein uL10 family. As to quaternary structure, part of the ribosomal stalk of the 50S ribosomal subunit. The N-terminus interacts with L11 and the large rRNA to form the base of the stalk. The C-terminus forms an elongated spine to which L12 dimers bind in a sequential fashion forming a multimeric L10(L12)X complex.

Functionally, forms part of the ribosomal stalk, playing a central role in the interaction of the ribosome with GTP-bound translation factors. This chain is Large ribosomal subunit protein uL10, found in Mycolicibacterium paratuberculosis (strain ATCC BAA-968 / K-10) (Mycobacterium paratuberculosis).